A 325-amino-acid chain; its full sequence is NAD kinase (325 aa).

The active-site Proton acceptor is the aspartate 91. Residues 91–92, histidine 96, 165–166, histidine 176, histidine 193, aspartate 195, and 206–211 contribute to the NAD(+) site; these read DG, ND, and TAYALS.

It belongs to the NAD kinase family. A divalent metal cation serves as cofactor.

It localises to the cytoplasm. It carries out the reaction NAD(+) + ATP = ADP + NADP(+) + H(+). Functionally, involved in the regulation of the intracellular balance of NAD and NADP, and is a key enzyme in the biosynthesis of NADP. Catalyzes specifically the phosphorylation on 2'-hydroxyl of the adenosine moiety of NAD to yield NADP. This Psychrobacter arcticus (strain DSM 17307 / VKM B-2377 / 273-4) protein is NAD kinase.